The following is a 636-amino-acid chain: Alpha-L-iduronidase (636 aa).

The first 16 residues, 1–16 (MLSLLLVLTTLARIHA), serve as a signal peptide directing secretion. P39, I43, and H45 together coordinate alpha-D-mannopyranose. Alpha-L-iduronate-binding residues include H78, N169, and E170. E170 acts as the Proton donor in catalysis. N-linked (GlcNAc...) asparagine glycosylation is present at N180. Alpha-L-iduronate is bound at residue K257. An N-linked (GlcNAc...) asparagine glycan is attached at N268. Alpha-L-iduronate-binding residues include E293 and G299. E293 acts as the Nucleophile in catalysis. Residue W300 participates in alpha-D-mannopyranose binding. Positions 342 and 356 each coordinate alpha-L-iduronate. 4 N-linked (GlcNAc...) asparagine glycosylation sites follow: N365, N448, N453, and N483. A disulfide bridge links C529 with C565. N-linked (GlcNAc...) asparagine glycosylation is present at N622.

This sequence belongs to the glycosyl hydrolase 39 family.

The protein localises to the lysosome. The catalysed reaction is Hydrolysis of unsulfated alpha-L-iduronosidic linkages in dermatan sulfate.. In terms of biological role, essential lysosomal hydrolase responsible for the degradation of glycosaminoglycans (GAG) such as heparan sulfate. Required for lysosome function and autophagy. Consequently, has an essential role in the development, maintenance and function of various cells, tissues, and organs, including the muscles and the central nervous system (CNS). This is Alpha-L-iduronidase from Drosophila melanogaster (Fruit fly).